The sequence spans 372 residues: Geranylgeranyl pyrophosphate synthase 4 (372 aa).

Positions 1–22 are cleaved as a signal peptide; sequence MEAQNIFLYLLIVFLSLHFVFT. Residues Lys121, Arg124, and His153 each coordinate isopentenyl diphosphate. Asp160 and Asp166 together coordinate Mg(2+). Arg171 serves as a coordination point for dimethylallyl diphosphate. Arg172 is an isopentenyl diphosphate binding site. Residues Lys257, Thr258, Gln295, Lys312, and Lys322 each contribute to the dimethylallyl diphosphate site.

The protein belongs to the FPP/GGPP synthase family. Monomer. It depends on Mg(2+) as a cofactor. As to expression, faintly expressed in flowers. Expressed in roots and siliques.

The protein resides in the endoplasmic reticulum. The enzyme catalyses isopentenyl diphosphate + dimethylallyl diphosphate = (2E)-geranyl diphosphate + diphosphate. It catalyses the reaction isopentenyl diphosphate + (2E)-geranyl diphosphate = (2E,6E)-farnesyl diphosphate + diphosphate. The catalysed reaction is isopentenyl diphosphate + (2E,6E)-farnesyl diphosphate = (2E,6E,10E)-geranylgeranyl diphosphate + diphosphate. It functions in the pathway isoprenoid biosynthesis; farnesyl diphosphate biosynthesis; farnesyl diphosphate from geranyl diphosphate and isopentenyl diphosphate: step 1/1. Its pathway is isoprenoid biosynthesis; geranyl diphosphate biosynthesis; geranyl diphosphate from dimethylallyl diphosphate and isopentenyl diphosphate: step 1/1. It participates in isoprenoid biosynthesis; geranylgeranyl diphosphate biosynthesis; geranylgeranyl diphosphate from farnesyl diphosphate and isopentenyl diphosphate: step 1/1. In terms of biological role, catalyzes the trans-addition of the three molecules of isopentenyl diphosphate (IPP) onto dimethylallyl diphosphate (DMAPP) to form geranylgeranyl diphosphate. The polypeptide is Geranylgeranyl pyrophosphate synthase 4 (Arabidopsis thaliana (Mouse-ear cress)).